A 161-amino-acid polypeptide reads, in one-letter code: Transcription elongation factor GreA (161 aa).

This sequence belongs to the GreA/GreB family.

Functionally, necessary for efficient RNA polymerase transcription elongation past template-encoded arresting sites. The arresting sites in DNA have the property of trapping a certain fraction of elongating RNA polymerases that pass through, resulting in locked ternary complexes. Cleavage of the nascent transcript by cleavage factors such as GreA or GreB allows the resumption of elongation from the new 3'terminus. GreA releases sequences of 2 to 3 nucleotides. The chain is Transcription elongation factor GreA from Desulfotalea psychrophila (strain LSv54 / DSM 12343).